We begin with the raw amino-acid sequence, 881 residues long: Band 4.1-like protein 1 (881 aa).

Met-1 carries the post-translational modification N-acetylmethionine. The segment at 1 to 88 is disordered; it reads MTTETGPDSE…TPSKAQKSPQ (88 aa). The segment covering 17–35 has biased composition (low complexity); that stretch reads EAPQQPEAAAAVTTPVTPA. Phosphothreonine is present on Thr-30. Positions 38-50 are enriched in basic and acidic residues; the sequence is GHPEANSNEKHPS. A Phosphoserine modification is found at Ser-75. Residues 76–87 show a composition bias toward polar residues; the sequence is ERTTPSKAQKSP. At Thr-79 the chain carries Phosphothreonine. The region spanning 97 to 378 is the FERM domain; it reads AICRVTLLDA…EHHTFFRLVS (282 aa). Tyr-343 is subject to Phosphotyrosine. Phosphoserine occurs at positions 378, 430, and 437. Residues 428–501 are disordered; sequence SRSLDGAEFS…HKQEFLDKPE (74 aa). Residues 444–457 show a composition bias toward basic and acidic residues; it reads ENHDAGPDGDKRDE. Phosphoserine occurs at positions 461 and 466. Residues 466–501 are compositionally biased toward basic and acidic residues; the sequence is SEAEEGEVRTPTKIKELKPEQETTPRHKQEFLDKPE. Residue Thr-475 is modified to Phosphothreonine. The interval 483–541 is spectrin--actin-binding; it reads KPEQETTPRHKQEFLDKPEDVLLKHQASINELKRTLKEPNSKLIHRDRDWERERRLPSS. Ser-510 is subject to Phosphoserine. A compositionally biased stretch (basic and acidic residues) spans 514-538; it reads LKRTLKEPNSKLIHRDRDWERERRL. Residues 514–596 are disordered; that stretch reads LKRTLKEPNS…QERDTVFLKD (83 aa). Phosphoserine occurs at positions 540, 541, 544, and 546. Thr-550 bears the Phosphothreonine mark. Residues 550–577 show a composition bias toward basic and acidic residues; the sequence is TPEKANERAGLREGSEEKVKPPRPRAPE. A phosphoserine mark is found at Ser-564 and Ser-578. Residue Thr-580 is modified to Phosphothreonine. Phosphoserine occurs at positions 639, 648, 650, 667, 672, 678, and 685. The disordered stretch occupies residues 642 to 699; that stretch reads ELDRDKSDSDTEGLLFSRDLNKGAPSQDDESGGIEDSPDRGACSTPDMPQFEPVKTET. Thr-686 carries the phosphothreonine modification. Phosphoserine is present on residues Ser-722, Ser-784, and Ser-870. Positions 746 to 881 are C-terminal (CTD); that stretch reads SITTETISTT…EERDKKPQES (136 aa).

As to quaternary structure, interacts with AGAP2. As to expression, highest expression in brain, lower in heart, kidney, pancreas, placenta, lung and skeletal muscle.

The protein localises to the cytoplasm. The protein resides in the cytoskeleton. Functionally, may function to confer stability and plasticity to neuronal membrane via multiple interactions, including the spectrin-actin-based cytoskeleton, integral membrane channels and membrane-associated guanylate kinases. The chain is Band 4.1-like protein 1 from Homo sapiens (Human).